The primary structure comprises 153 residues: NADPH-dependent 7-cyano-7-deazaguanine reductase (153 aa).

The disordered stretch occupies residues 1-22 (MTDNRYDNLGQLGTSTPLPDNP). The Thioimide intermediate role is filled by Cys51. Asp58 (proton donor) is an active-site residue. Substrate is bound by residues 73–75 (VES) and 92–93 (HE).

This sequence belongs to the GTP cyclohydrolase I family. QueF type 1 subfamily.

The protein localises to the cytoplasm. The catalysed reaction is 7-aminomethyl-7-carbaguanine + 2 NADP(+) = 7-cyano-7-deazaguanine + 2 NADPH + 3 H(+). The protein operates within tRNA modification; tRNA-queuosine biosynthesis. In terms of biological role, catalyzes the NADPH-dependent reduction of 7-cyano-7-deazaguanine (preQ0) to 7-aminomethyl-7-deazaguanine (preQ1). This Maricaulis maris (strain MCS10) (Caulobacter maris) protein is NADPH-dependent 7-cyano-7-deazaguanine reductase.